We begin with the raw amino-acid sequence, 155 residues long: Small ribosomal subunit protein uS7c (155 aa).

This sequence belongs to the universal ribosomal protein uS7 family. Part of the 30S ribosomal subunit.

It is found in the plastid. In terms of biological role, one of the primary rRNA binding proteins, it binds directly to 16S rRNA where it nucleates assembly of the head domain of the 30S subunit. The sequence is that of Small ribosomal subunit protein uS7c (rps7) from Lathraea clandestina (Purple toothwort).